Consider the following 1037-residue polypeptide: Ribonuclease E (1037 aa).

Disordered regions lie at residues 1 to 23, 47 to 90, and 106 to 369; these read MAED…LPER, FDGR…ETPV, and VSEA…PILS. Over residues 47-67 the composition is skewed to basic and acidic residues; that stretch reads FDGRQRSAHSTVDKADAERVR. 2 stretches are compositionally biased toward low complexity: residues 68–90 and 106–126; these read AALT…ETPV and VSEA…PAAE. Acidic residues-rich tracts occupy residues 127–141 and 196–226; these read AEAE…EAET and VVDD…DDDQ. Residues 230 to 242 are compositionally biased toward basic residues; that stretch reads PRRRRRGRRGRGR. Acidic residues predominate over residues 248–284; sequence NDDATSDADTDSTEDQTDGDEQESGEDSDDSGDEDST. Basic residues predominate over residues 291–301; the sequence is RRRRRRRRRKS. Residues 320–335 show a composition bias toward basic and acidic residues; sequence VHERAPRTERSDKSDD. The S1 motif domain maps to 427 to 504; that stretch reads GNIYLGIVQN…GHKGARLTTQ (78 aa). A coiled-coil region spans residues 561–589; the sequence is EDIRSDVERLQKRWSEIEAKAAEVTEKKA. Mg(2+)-binding residues include Asp-694 and Asp-738. 2 residues coordinate Zn(2+): Cys-796 and Cys-799. The interval 810–1037 is disordered; that stretch reads PIDSASSNGG…ARPAGPPSHD (228 aa). Over residues 834–843 the composition is skewed to basic residues; the sequence is RRGKRGKKGA. Over residues 844 to 864 the composition is skewed to basic and acidic residues; that stretch reads ARTEEVHVAKVPDHTPGEHPM. The span at 879–891 shows a compositional bias: acidic residues; the sequence is EDHEDHEDHETAE. Residues 897 to 913 are compositionally biased toward basic and acidic residues; that stretch reads EVRDDTRDEHDADERAH. Positions 923 to 1006 are enriched in acidic residues; the sequence is GDEDLDDSDE…DSDSDEDEEP (84 aa).

The protein belongs to the RNase E/G family. As to quaternary structure, assembles into a homotetramer formed by a dimer of dimers. Interacts with DNA-binding protein HhupB. Requires Mg(2+) as cofactor. Zn(2+) serves as cofactor.

Its subcellular location is the cytoplasm. The catalysed reaction is Endonucleolytic cleavage of single-stranded RNA in A- and U-rich regions.. Its function is as follows. Endoribonuclease that plays a central role in RNA processing and decay. Plays a major role in pre-16S rRNA maturation, probably generating the mature 5'-end, and a minor role in pre-5S and pre-23S rRNA maturation. Probably also processes tRNA. RNase E and HupB jointly contribute to cellular adaptation to changing growth conditions and survival during antibiotic treatment. Overexpression or depletion leads to changes in gene expression; overexpression induces metabolic slowdown and cell stress while depleted strains grow less well than induced strains. This Mycolicibacterium smegmatis (strain ATCC 700084 / mc(2)155) (Mycobacterium smegmatis) protein is Ribonuclease E (rne).